The chain runs to 278 residues: 4-deoxy-L-threo-5-hexosulose-uronate ketol-isomerase (278 aa).

Zn(2+) contacts are provided by His-196, His-198, Glu-203, and His-245.

It belongs to the KduI family. Zn(2+) serves as cofactor.

The catalysed reaction is 5-dehydro-4-deoxy-D-glucuronate = 3-deoxy-D-glycero-2,5-hexodiulosonate. Its pathway is glycan metabolism; pectin degradation; 2-dehydro-3-deoxy-D-gluconate from pectin: step 4/5. Catalyzes the isomerization of 5-dehydro-4-deoxy-D-glucuronate to 3-deoxy-D-glycero-2,5-hexodiulosonate. In Burkholderia cenocepacia (strain ATCC BAA-245 / DSM 16553 / LMG 16656 / NCTC 13227 / J2315 / CF5610) (Burkholderia cepacia (strain J2315)), this protein is 4-deoxy-L-threo-5-hexosulose-uronate ketol-isomerase.